Here is a 441-residue protein sequence, read N- to C-terminus: Histidine--tRNA ligase (441 aa).

Belongs to the class-II aminoacyl-tRNA synthetase family. As to quaternary structure, homodimer.

The protein resides in the cytoplasm. It catalyses the reaction tRNA(His) + L-histidine + ATP = L-histidyl-tRNA(His) + AMP + diphosphate + H(+). The sequence is that of Histidine--tRNA ligase from Koribacter versatilis (strain Ellin345).